A 409-amino-acid polypeptide reads, in one-letter code: Alpha-1-antitrypsin (409 aa).

An N-terminal signal peptide occupies residues 1 to 15 (LLLAGLCCLLPGSLA). Residues 18 to 39 (PQGDAAQKTDTPPHDQNHPTLN) are disordered. N-linked (GlcNAc...) asparagine glycosylation is found at N61, N98, N136, and N262. The interval 364–383 (GAMFLEAIPMSIPPEVKFNK) is RCL. The residue at position 374 (S374) is a Phosphoserine.

It belongs to the serpin family. In terms of assembly, interacts with CELA2A. Interacts with ERGIC3 and LMAN1/ERGIC53. Interacts with PRSS1/Trypsin. Plasma.

The protein localises to the secreted. Inhibitor of serine proteases. Its primary target is elastase, but it also has a moderate affinity for plasmin and thrombin. Inhibits trypsin, chymotrypsin and plasminogen activator. The sequence is that of Alpha-1-antitrypsin (SERPINA1) from Papio anubis (Olive baboon).